A 341-amino-acid polypeptide reads, in one-letter code: MTYRDAGVDIDAGNALVERIKPLVKRSFRPEVMGGLGGFGALFDLSGKYKEPVLVSGTDGVGTKLKLAQQLGRHDTIGIDLVGMCVNDVLVQGAEPLFFLDYFATGKLDVDTAAAVVGGIARGCELSGCALIGGETAEMPDMYPPGEYDLAGFTVGAVEKSQLLDGAQVREGDVLIGIASSGPHSNGYSLIRKIYERAGAPAEHVLDDGTKLIDALMAPTALYVKPVLALLKSHGEAIHAMAHITGGGLTENIIRVIPEGLGLEIDATAWTLPPVFAWLQREGAVADAEMWRTFNCGIGFVLVAAPAQAAALEQALDAQSLAHWRIGQVVTAHGDERVRIG.

It belongs to the AIR synthase family.

The protein resides in the cytoplasm. The catalysed reaction is 2-formamido-N(1)-(5-O-phospho-beta-D-ribosyl)acetamidine + ATP = 5-amino-1-(5-phospho-beta-D-ribosyl)imidazole + ADP + phosphate + H(+). It functions in the pathway purine metabolism; IMP biosynthesis via de novo pathway; 5-amino-1-(5-phospho-D-ribosyl)imidazole from N(2)-formyl-N(1)-(5-phospho-D-ribosyl)glycinamide: step 2/2. The polypeptide is Phosphoribosylformylglycinamidine cyclo-ligase (Xanthomonas axonopodis pv. citri (strain 306)).